A 150-amino-acid chain; its full sequence is MAALDPTLLILLALAALGILSHNMTVTLAILILIAIRITPLNSFFPWVEKYGLTIGVLILTIGVMAPIASGKISASEVLHSFVQWKSILAIVVGVAVSWLGGRGVSLMTHQPSVVAGLLVGTVLGVALFKGVPVGPLIAAGLLSLVIGKS.

Transmembrane regions (helical) follow at residues 16-36, 51-71, 88-108, and 114-134; these read ALGI…LIAI, YGLT…IASG, ILAI…VSLM, and VVAG…GVPV.

The protein belongs to the UPF0756 family.

Its subcellular location is the cell membrane. The polypeptide is UPF0756 membrane protein YPN_1328 (Yersinia pestis bv. Antiqua (strain Nepal516)).